The chain runs to 453 residues: tRNA modification GTPase MnmE (453 aa).

Residues Arg-23, Glu-80, and Lys-120 each contribute to the (6S)-5-formyl-5,6,7,8-tetrahydrofolate site. The TrmE-type G domain maps to 216 to 375 (GSKIVIIGKP…LIKYLKDLNC (160 aa)). Asn-226 contacts K(+). Residues 226 to 231 (NSGKSS), 245 to 251 (TSIEGTT), and 270 to 273 (DTAG) each bind GTP. Ser-230 contributes to the Mg(2+) binding site. Residues Thr-245, Ile-247, and Thr-250 each contribute to the K(+) site. Residue Thr-251 participates in Mg(2+) binding. Lys-453 serves as a coordination point for (6S)-5-formyl-5,6,7,8-tetrahydrofolate.

Belongs to the TRAFAC class TrmE-Era-EngA-EngB-Septin-like GTPase superfamily. TrmE GTPase family. Homodimer. Heterotetramer of two MnmE and two MnmG subunits. K(+) serves as cofactor.

It is found in the cytoplasm. Exhibits a very high intrinsic GTPase hydrolysis rate. Involved in the addition of a carboxymethylaminomethyl (cmnm) group at the wobble position (U34) of certain tRNAs, forming tRNA-cmnm(5)s(2)U34. This chain is tRNA modification GTPase MnmE, found in Wigglesworthia glossinidia brevipalpis.